The primary structure comprises 503 residues: Geissoschizine oxidase (503 aa).

The helical transmembrane segment at 7 to 27 (FSSPSFFFLLPFLFLLIKPLI) threads the bilayer. Cys-441 contacts heme.

This sequence belongs to the cytochrome P450 family. Heme is required as a cofactor.

Its subcellular location is the membrane. It catalyses the reaction (19E)-geissoschizine + reduced [NADPH--hemoprotein reductase] + O2 = akuammicine + formate + oxidized [NADPH--hemoprotein reductase] + H2O + H(+). It carries out the reaction (19E)-geissoschizine + reduced [NADPH--hemoprotein reductase] + O2 = 3,17-didehydrostemmadenine + oxidized [NADPH--hemoprotein reductase] + 2 H2O. The enzyme catalyses 3,17-didehydrostemmadenine = 17-dehydropreakuammicine. It participates in alkaloid biosynthesis. Its function is as follows. Monooxygenase involved in the biosynthesis of curare monoterpene indole alkaloids (MIAs), natural products such as diaboline, a pharmacologically active compound used to regulate blood pressure. Curare alkaloids act as animal glycine receptor antagonists. Catalyzes the conversion of geissoschizine to dehydropreakuammicine by cyclization, which is spontaneously converted into akuammicine by aromatization. This chain is Geissoschizine oxidase, found in Strychnos sp.